Here is a 512-residue protein sequence, read N- to C-terminus: Glutathione-binding protein GsiB (512 aa).

The N-terminal stretch at 1 to 26 (MARAVHRSGLVALGIATALMASCAFA) is a signal peptide.

The protein belongs to the bacterial solute-binding protein 5 family. As to quaternary structure, the complex is composed of two ATP-binding proteins (GsiA), two transmembrane proteins (GsiC and GsiD) and a solute-binding protein (GsiB).

Its subcellular location is the periplasm. Functionally, part of the ABC transporter complex GsiABCD involved in glutathione import. Binds glutathione. This is Glutathione-binding protein GsiB from Escherichia coli O1:K1 / APEC.